Here is a 91-residue protein sequence, read N- to C-terminus: Small ribosomal subunit protein uS19 (91 aa).

The protein belongs to the universal ribosomal protein uS19 family.

Protein S19 forms a complex with S13 that binds strongly to the 16S ribosomal RNA. In Lachnospira eligens (strain ATCC 27750 / DSM 3376 / VPI C15-48 / C15-B4) (Eubacterium eligens), this protein is Small ribosomal subunit protein uS19.